The chain runs to 328 residues: Tetraacyldisaccharide 4'-kinase (328 aa).

ATP is bound at residue 55 to 62; that stretch reads TAGGNGKT.

The protein belongs to the LpxK family.

The enzyme catalyses a lipid A disaccharide + ATP = a lipid IVA + ADP + H(+). It functions in the pathway glycolipid biosynthesis; lipid IV(A) biosynthesis; lipid IV(A) from (3R)-3-hydroxytetradecanoyl-[acyl-carrier-protein] and UDP-N-acetyl-alpha-D-glucosamine: step 6/6. Transfers the gamma-phosphate of ATP to the 4'-position of a tetraacyldisaccharide 1-phosphate intermediate (termed DS-1-P) to form tetraacyldisaccharide 1,4'-bis-phosphate (lipid IVA). In Yersinia enterocolitica serotype O:8 / biotype 1B (strain NCTC 13174 / 8081), this protein is Tetraacyldisaccharide 4'-kinase.